The following is a 300-amino-acid chain: HTH-type transcriptional regulator ArgP (300 aa).

Positions 4-60 (PDYRTLQALDAVIRERGFERAAQKLCITQSAVSQRIKQLENLFGQPLLVRTVPPRPT) constitute an HTH lysR-type domain. Residues 21-40 (FERAAQKLCITQSAVSQRIK) constitute a DNA-binding region (H-T-H motif).

It belongs to the LysR transcriptional regulatory family. As to quaternary structure, homodimer.

Its function is as follows. Controls the transcription of genes involved in arginine and lysine metabolism. In Photorhabdus laumondii subsp. laumondii (strain DSM 15139 / CIP 105565 / TT01) (Photorhabdus luminescens subsp. laumondii), this protein is HTH-type transcriptional regulator ArgP.